We begin with the raw amino-acid sequence, 1069 residues long: Enteropeptidase (1069 aa).

Topologically, residues 1 to 18 are cytoplasmic; sequence MKSSRDEAVGHHSISSFE. A helical; Signal-anchor for type II membrane protein transmembrane segment spans residues 19 to 47; it reads VMLSALFIMLMVFSIGLIAVSWLAVKESE. Residues 48–1069 are Extracellular-facing; sequence GDAALGKSHE…FIEWIHSFLH (1022 aa). The SEA domain occupies 54 to 169; it reads KSHEVRGTFK…NSIDITASLS (116 aa). N-linked (GlcNAc...) asparagine glycosylation is found at Asn-147, Asn-197, and Asn-212. The region spanning 227–268 is the LDL-receptor class A 1 domain; it reads IECQPGSRPCAHAWNCVATDLFCDGEVNCPDGSDEDTGLCAT. Intrachain disulfides connect Cys-229/Cys-242, Cys-236/Cys-255, Cys-249/Cys-266, and Cys-270/Cys-298. Residues 270 to 379 form the CUB 1 domain; that stretch reads CDGRFLLTGD…IGFNATYSTF (110 aa). Asn-373, Asn-380, Asn-433, Asn-515, Asn-579, and Asn-675 each carry an N-linked (GlcNAc...) asparagine glycan. Residues 387-549 enclose the MAM domain; it reads YEKIDCTFDD…ISLTNGICSQ (163 aa). Cys-569 and Cys-597 form a disulfide bridge. The CUB 2 domain maps to 569 to 679; sequence CGGPFELWEP…KGFKANFTSG (111 aa). The region spanning 686–724 is the LDL-receptor class A 2 domain; the sequence is EPCQDDEFQCKDGNCIPLGNLCDSYPHCRDGSDEASCVR. 3 disulfide bridges follow: Cys-688-Cys-700, Cys-695-Cys-713, and Cys-707-Cys-722. Positions 723-816 constitute an SRCR domain; that stretch reads VRFLNGTRSN…LILLQCNHKS (94 aa). Residues Asn-727, Asn-751, Asn-770, and Asn-791 are each glycosylated (N-linked (GlcNAc...) asparagine). Intrachain disulfides connect Cys-802/Cys-812, Cys-817/Cys-945, Cys-859/Cys-875, Cys-959/Cys-1027, Cys-991/Cys-1006, and Cys-1017/Cys-1045. The Peptidase S1 domain occupies 830–1069; sequence IVGGSDAQAG…FIEWIHSFLH (240 aa). His-874 (charge relay system) is an active-site residue. An N-linked (GlcNAc...) asparagine glycan is attached at Asn-897. Asp-925 acts as the Charge relay system in catalysis. N-linked (GlcNAc...) asparagine glycosylation is found at Asn-936 and Asn-999. Catalysis depends on Ser-1021, which acts as the Charge relay system.

The protein belongs to the peptidase S1 family. In terms of assembly, heterodimer of a catalytic (light) chain and a multidomain (heavy) chain linked by a disulfide bond. The chains are derived from a single precursor that is cleaved by a trypsin-like protease.

The protein resides in the membrane. It catalyses the reaction Activation of trypsinogen by selective cleavage of 6-Lys-|-Ile-7 bond.. Its function is as follows. Responsible for initiating activation of pancreatic proteolytic proenzymes (trypsin, chymotrypsin and carboxypeptidase A). It catalyzes the conversion of trypsinogen to trypsin which in turn activates other proenzymes including chymotrypsinogen, procarboxypeptidases, and proelastases. The polypeptide is Enteropeptidase (Tmprss15) (Mus musculus (Mouse)).